Consider the following 189-residue polypeptide: Cell division protein SepF (189 aa).

Disordered stretches follow at residues Met-1 to Gly-75 and Ser-155 to Pro-174.

This sequence belongs to the SepF family. As to quaternary structure, homodimer. Interacts with FtsZ.

It is found in the cytoplasm. Functionally, cell division protein that is part of the divisome complex and is recruited early to the Z-ring. Probably stimulates Z-ring formation, perhaps through the cross-linking of FtsZ protofilaments. Its function overlaps with FtsA. This chain is Cell division protein SepF, found in Synechococcus sp. (strain JA-3-3Ab) (Cyanobacteria bacterium Yellowstone A-Prime).